A 582-amino-acid polypeptide reads, in one-letter code: MAHEGSRQVRDRGVTRSKAEKVRPPTVPVPQVDIVPGRLSEAEWMALTALEEGEDVVGDILADLLARVMDSAFKVYLTQQCIPFTISQAREAMLQITEWRFLARDEGESAVAEDPTWGEDEEPSACTTDSWAQGSVPVLHASTSEGLENFQGEDPGGVDRIPLGRSWMGRGSQEQMESWEPSPQLRVTSAPPPTSELFQEAGPGGPVEEADGQSRGLSSAGSLSASFQLSVEEAPADDADPSLDPYLVASPQASTGRGHPLGFHLSLEDLYCCMPQLDAAGDRLELRSEGVPCIASGVLVSYPSVGGATRPSASCQQQRAGHSDVRLSAHHHRMRRKAAVKRLDPARLPCHWVRPLAEVLVPDSQTRPLEAYRGRQRGEKTKARAEPQALGPGTRVSPAAFFPLRPGIPFRDLDSGPALLFPTLNLGLSSPSLESKLPLPNSRIRFLTTHPVLPDVARSRSPKLWPSVRWPSGWEGKAELLGELWAGRTRVPPQGLELADREGQDPGRWPRTTPPVLEATSQVMWKPVLLPEALKLAPGVSMWNRSTQVLLSSGVPEQEDKEGSTFPPVEQHPIQTGAPKPR.

Residues 1–23 are compositionally biased toward basic and acidic residues; it reads MAHEGSRQVRDRGVTRSKAEKVR. 3 disordered regions span residues 1-29, 110-133, and 147-221; these read MAHE…TVPV, AVAE…SWAQ, and LENF…SSAG. The residue at position 242 (S242) is a Phosphoserine. 2 disordered regions span residues 310 to 331 and 551 to 582; these read RPSA…SAHH and LSSG…PKPR. Over residues 311 to 320 the composition is skewed to polar residues; that stretch reads PSASCQQQRA.

This is an uncharacterized protein from Homo sapiens (Human).